The primary structure comprises 207 residues: Guanylate kinase (207 aa).

The Guanylate kinase-like domain maps to 6–185 (GLLIVLSGPS…AKQRIQSIVE (180 aa)). ATP is bound at residue 13 to 20 (GPSGVGKG).

The protein belongs to the guanylate kinase family.

Its subcellular location is the cytoplasm. The catalysed reaction is GMP + ATP = GDP + ADP. Its function is as follows. Essential for recycling GMP and indirectly, cGMP. The polypeptide is Guanylate kinase (Staphylococcus saprophyticus subsp. saprophyticus (strain ATCC 15305 / DSM 20229 / NCIMB 8711 / NCTC 7292 / S-41)).